A 100-amino-acid polypeptide reads, in one-letter code: Co-chaperonin GroES (100 aa).

Belongs to the GroES chaperonin family. In terms of assembly, heptamer of 7 subunits arranged in a ring. Interacts with the chaperonin GroEL.

The protein localises to the cytoplasm. In terms of biological role, together with the chaperonin GroEL, plays an essential role in assisting protein folding. The GroEL-GroES system forms a nano-cage that allows encapsulation of the non-native substrate proteins and provides a physical environment optimized to promote and accelerate protein folding. GroES binds to the apical surface of the GroEL ring, thereby capping the opening of the GroEL channel. This is Co-chaperonin GroES from Mycobacterium leprae (strain Br4923).